A 204-amino-acid polypeptide reads, in one-letter code: MRAAPPTSLQALIEALKVLPGVGPKSAQRMAYHLLQHDREGARKLGDALRGAVDGIRHCTRCNTFTELEICGTCSDPERDATLLCVVETPADQVMIEQTLTYRGQYFVLMGRLSPLDGIGPKEIHLDRLLARATDPELGGPASEVIVATNFTSEGEATAHYIGEMLKARGLKVSRLARGVPVGGELEYVDAGTIARAVMDRRTL.

A C4-type zinc finger spans residues 59-74 (CTRCNTFTELEICGTC). One can recognise a Toprim domain in the interval 82–181 (TLLCVVETPA…KVSRLARGVP (100 aa)).

The protein belongs to the RecR family.

May play a role in DNA repair. It seems to be involved in an RecBC-independent recombinational process of DNA repair. It may act with RecF and RecO. In Cupriavidus metallidurans (strain ATCC 43123 / DSM 2839 / NBRC 102507 / CH34) (Ralstonia metallidurans), this protein is Recombination protein RecR.